The chain runs to 123 residues: UPF0102 protein Pput_4400 (123 aa).

Belongs to the UPF0102 family.

The polypeptide is UPF0102 protein Pput_4400 (Pseudomonas putida (strain ATCC 700007 / DSM 6899 / JCM 31910 / BCRC 17059 / LMG 24140 / F1)).